A 345-amino-acid polypeptide reads, in one-letter code: Myb/SANT-like DNA-binding domain-containing protein 4 (345 aa).

Residues 4–77 (LKRKRKSNFS…EVKRRYLDWR (74 aa)) form the Myb-like domain. Residue Lys-9 forms a Glycyl lysine isopeptide (Lys-Gly) (interchain with G-Cter in SUMO2) linkage. The residue at position 106 (Ser-106) is a Phosphoserine. Glycyl lysine isopeptide (Lys-Gly) (interchain with G-Cter in SUMO2) cross-links involve residues Lys-114 and Lys-142. Residues 141–175 (VKVEEEERDPQSPEFEIEEEEEMLSSVIPDSRREN) are disordered. Thr-188 is subject to Phosphothreonine. Positions 202–344 (HLLMNIEKQK…RLRIQKEGHL (143 aa)) form a coiled coil. Glycyl lysine isopeptide (Lys-Gly) (interchain with G-Cter in SUMO2) cross-links involve residues Lys-237, Lys-254, and Lys-273.

The sequence is that of Myb/SANT-like DNA-binding domain-containing protein 4 (Msantd4) from Rattus norvegicus (Rat).